The chain runs to 671 residues: tRNA 5-methylaminomethyl-2-thiouridine biosynthesis bifunctional protein MnmC (671 aa).

The interval 1–245 is tRNA (mnm(5)s(2)U34)-methyltransferase; the sequence is MVNVMNTLSF…KREMLWGEKP (245 aa). The FAD-dependent cmnm(5)s(2)U34 oxidoreductase stretch occupies residues 272–671; sequence VGGGVASLFV…RKLLKGSKVE (400 aa).

In the N-terminal section; belongs to the methyltransferase superfamily. tRNA (mnm(5)s(2)U34)-methyltransferase family. This sequence in the C-terminal section; belongs to the DAO family. The cofactor is FAD.

The protein localises to the cytoplasm. It catalyses the reaction 5-aminomethyl-2-thiouridine(34) in tRNA + S-adenosyl-L-methionine = 5-methylaminomethyl-2-thiouridine(34) in tRNA + S-adenosyl-L-homocysteine + H(+). Its function is as follows. Catalyzes the last two steps in the biosynthesis of 5-methylaminomethyl-2-thiouridine (mnm(5)s(2)U) at the wobble position (U34) in tRNA. Catalyzes the FAD-dependent demodification of cmnm(5)s(2)U34 to nm(5)s(2)U34, followed by the transfer of a methyl group from S-adenosyl-L-methionine to nm(5)s(2)U34, to form mnm(5)s(2)U34. This chain is tRNA 5-methylaminomethyl-2-thiouridine biosynthesis bifunctional protein MnmC, found in Actinobacillus pleuropneumoniae serotype 5b (strain L20).